We begin with the raw amino-acid sequence, 452 residues long: Methionine aminopeptidase 2 (452 aa).

Residues 1 to 91 (MTGVTGTEDT…KNKKKKKKKI (91 aa)) form a disordered region. Basic and acidic residues predominate over residues 8-38 (EDTKVIESKINELNIDKSKPEKTNKVNKSDD). Acidic residues predominate over residues 39–62 (VDNDDVDNDDNDDEDNDDDDDEIT). A compositionally biased stretch (basic residues) spans 74–91 (KKKKKNKNKNKKKKKKKI). A substrate-binding site is contributed by H203. A divalent metal cation contacts are provided by D223, D234, and H305. H313 contacts substrate. 2 residues coordinate a divalent metal cation: E338 and E433.

The protein belongs to the peptidase M24A family. Methionine aminopeptidase eukaryotic type 2 subfamily. Requires Co(2+) as cofactor. The cofactor is Zn(2+). It depends on Mn(2+) as a cofactor. Fe(2+) serves as cofactor.

The protein resides in the cytoplasm. The catalysed reaction is Release of N-terminal amino acids, preferentially methionine, from peptides and arylamides.. Its function is as follows. Cotranslationally removes the N-terminal methionine from nascent proteins. The N-terminal methionine is often cleaved when the second residue in the primary sequence is small and uncharged (Met-Ala-, Cys, Gly, Pro, Ser, Thr, or Val). The protein is Methionine aminopeptidase 2 of Candida dubliniensis (strain CD36 / ATCC MYA-646 / CBS 7987 / NCPF 3949 / NRRL Y-17841) (Yeast).